A 286-amino-acid polypeptide reads, in one-letter code: Formamidopyrimidine-DNA glycosylase (286 aa).

The Schiff-base intermediate with DNA role is filled by Pro2. Glu3 serves as the catalytic Proton donor. Catalysis depends on Lys61, which acts as the Proton donor; for beta-elimination activity. His96, Arg117, and Lys160 together coordinate DNA. The FPG-type zinc-finger motif lies at Asp246–Arg280. Arg270 serves as the catalytic Proton donor; for delta-elimination activity.

It belongs to the FPG family. In terms of assembly, monomer. Zn(2+) serves as cofactor.

It catalyses the reaction Hydrolysis of DNA containing ring-opened 7-methylguanine residues, releasing 2,6-diamino-4-hydroxy-5-(N-methyl)formamidopyrimidine.. The catalysed reaction is 2'-deoxyribonucleotide-(2'-deoxyribose 5'-phosphate)-2'-deoxyribonucleotide-DNA = a 3'-end 2'-deoxyribonucleotide-(2,3-dehydro-2,3-deoxyribose 5'-phosphate)-DNA + a 5'-end 5'-phospho-2'-deoxyribonucleoside-DNA + H(+). Involved in base excision repair of DNA damaged by oxidation or by mutagenic agents. Acts as a DNA glycosylase that recognizes and removes damaged bases. Has a preference for oxidized purines, such as 7,8-dihydro-8-oxoguanine (8-oxoG). Has AP (apurinic/apyrimidinic) lyase activity and introduces nicks in the DNA strand. Cleaves the DNA backbone by beta-delta elimination to generate a single-strand break at the site of the removed base with both 3'- and 5'-phosphates. This Streptomyces coelicolor (strain ATCC BAA-471 / A3(2) / M145) protein is Formamidopyrimidine-DNA glycosylase (mutM).